Here is a 257-residue protein sequence, read N- to C-terminus: Imidazole glycerol phosphate synthase subunit HisF (257 aa).

Residues D12 and D131 contribute to the active site.

It belongs to the HisA/HisF family. As to quaternary structure, heterodimer of HisH and HisF.

It is found in the cytoplasm. It catalyses the reaction 5-[(5-phospho-1-deoxy-D-ribulos-1-ylimino)methylamino]-1-(5-phospho-beta-D-ribosyl)imidazole-4-carboxamide + L-glutamine = D-erythro-1-(imidazol-4-yl)glycerol 3-phosphate + 5-amino-1-(5-phospho-beta-D-ribosyl)imidazole-4-carboxamide + L-glutamate + H(+). The protein operates within amino-acid biosynthesis; L-histidine biosynthesis; L-histidine from 5-phospho-alpha-D-ribose 1-diphosphate: step 5/9. Its function is as follows. IGPS catalyzes the conversion of PRFAR and glutamine to IGP, AICAR and glutamate. The HisF subunit catalyzes the cyclization activity that produces IGP and AICAR from PRFAR using the ammonia provided by the HisH subunit. The chain is Imidazole glycerol phosphate synthase subunit HisF from Burkholderia lata (strain ATCC 17760 / DSM 23089 / LMG 22485 / NCIMB 9086 / R18194 / 383).